Here is a 365-residue protein sequence, read N- to C-terminus: MKLPHFFVLAALVLSGAAHAERIKDIAAIQGVRANQLFGYGLVVGLDGTGDQTTQTPFTTQSIANMLTQMGVNLPPGINMQLKNVAAVMVTADLPPFAQAGQAIDVTVSSIGNAKSLRGGTLVMAPLKGADGLVYAMAQGSLVVSGAGASANGSKVQVNHLSVGRIPAGATVERTVATALGESGSINLELRQSDFTTASRVVDVVNARFGADTARALNARVVAVKTPLGASERVAFLGAIEGLEVSPGQAMAKVIINARTGSVVMNQTVTLDPSAVSHGNLSVVISTAPVISQPAPFGRGETVVAAESQIEIRQQPGEVMMLKGGASLADVVKALNSIGATPQDLLAILQALKASGALRAELEVI.

A signal peptide spans 1–20 (MKLPHFFVLAALVLSGAAHA).

Belongs to the FlgI family. As to quaternary structure, the basal body constitutes a major portion of the flagellar organelle and consists of four rings (L,P,S, and M) mounted on a central rod.

It is found in the periplasm. The protein resides in the bacterial flagellum basal body. Its function is as follows. Assembles around the rod to form the L-ring and probably protects the motor/basal body from shearing forces during rotation. This Thiobacillus denitrificans (strain ATCC 25259 / T1) protein is Flagellar P-ring protein.